Consider the following 144-residue polypeptide: Bacilliredoxin BT9727_3899 (144 aa).

The protein belongs to the bacilliredoxin family.

The protein is Bacilliredoxin BT9727_3899 of Bacillus thuringiensis subsp. konkukian (strain 97-27).